A 614-amino-acid polypeptide reads, in one-letter code: Zinc metalloproteinase-disintegrin-like Eoc1 (614 aa).

Positions 1 to 19 (MQVLLITISLAVLPYLGSS) are cleaved as a signal peptide. The propeptide occupies 20–193 (IILESGIVND…KASQLNLTPE (174 aa)). Glutamine 194 bears the Pyrrolidone carboxylic acid mark. In terms of domain architecture, Peptidase M12B spans 202 to 398 (KHIKVAIVAD…KMPQCILIKP (197 aa)). An N-linked (GlcNAc...) asparagine glycan is attached at asparagine 268. 3 cysteine pairs are disulfide-bonded: cysteine 313–cysteine 393, cysteine 353–cysteine 377, and cysteine 355–cysteine 360. Histidine 338 is a Zn(2+) binding site. The active site involves glutamate 339. Zn(2+) is bound by residues histidine 342 and histidine 348. The N-linked (GlcNAc...) asparagine glycan is linked to asparagine 376. One can recognise a Disintegrin domain in the interval 406–492 (PPVCGNSLVE…ECPADQFQRN (87 aa)). Ca(2+) contacts are provided by valine 408, asparagine 411, leucine 413, glutamate 415, glutamate 418, and aspartate 421. Intrachain disulfides connect cysteine 409/cysteine 438, cysteine 420/cysteine 433, cysteine 422/cysteine 428, cysteine 432/cysteine 455, cysteine 446/cysteine 452, cysteine 451/cysteine 477, cysteine 464/cysteine 484, cysteine 471/cysteine 503, cysteine 496/cysteine 508, cysteine 515/cysteine 565, cysteine 530/cysteine 576, cysteine 543/cysteine 553, cysteine 560/cysteine 602, and cysteine 596/cysteine 607. A D/ECD-tripeptide motif is present at residues 470–472 (ECD). The N-linked (GlcNAc...) asparagine glycan is linked to asparagine 498.

Belongs to the venom metalloproteinase (M12B) family. P-III subfamily. P-IIIc sub-subfamily. In terms of assembly, heterodimer; disulfide-linked. It depends on Zn(2+) as a cofactor. Expressed by the venom gland.

The protein localises to the secreted. Functionally, this metalloproteinase hydrolyzes azocasein, and oxidized insulin B-chain. Also hydrolyzes the alpha-chain (FGA) and more slowly the beta-chain of fibrinogen (FGB), without affecting the gamma-chain. Does not cleave fibrin. Inhibits endothelial cell adhesion to extracellular matrix proteins such as fibrinogen, fibronectin, vitronectin, collagen I, and collagen IV. Induces apoptosis in vascular endothelial cells. The chain is Zinc metalloproteinase-disintegrin-like Eoc1 (Svmp3-Eoc1) from Echis ocellatus (Ocellated saw-scaled viper).